Here is a 225-residue protein sequence, read N- to C-terminus: Viral late gene transcription factor 3 (225 aa).

A zinc finger spans residues 7 to 27 (CSNCKHNGLITESNHEFCIFC).

This sequence belongs to the nucleo-cytoplasmic large DNA viruses (NCLDVs) VLTF-3 family. As to quaternary structure, interacts with the late transcription elongation factor H5/VLTF-4. Interacts with the late transcription factors VLTF-1.

Acts with RNA polymerase to initiate transcription from late gene promoters. The protein is Viral late gene transcription factor 3 (VLTF3) of Fowlpox virus (strain NVSL) (FPV).